The chain runs to 343 residues: Holliday junction branch migration complex subunit RuvB (343 aa).

The segment at 1 to 20 is disordered; it reads MEEMASRMISGDPELGEPFQ. Residues 1–185 are large ATPase domain (RuvB-L); it reads MEEMASRMIS…FGILARMQFY (185 aa). ATP-binding positions include leucine 24, arginine 25, glycine 66, lysine 69, threonine 70, threonine 71, 132-134, arginine 175, tyrosine 185, and arginine 222; that span reads EDF. Residue threonine 70 participates in Mg(2+) binding. Positions 186-256 are small ATPAse domain (RuvB-S); the sequence is EPDELQQIVT…LADRALLALE (71 aa). Positions 259–343 are head domain (RuvB-H); the sequence is RNGLDNMDHR…PRPVQQGTLL (85 aa). 3 residues coordinate DNA: arginine 295, arginine 314, and arginine 319.

The protein belongs to the RuvB family. Homohexamer. Forms an RuvA(8)-RuvB(12)-Holliday junction (HJ) complex. HJ DNA is sandwiched between 2 RuvA tetramers; dsDNA enters through RuvA and exits via RuvB. An RuvB hexamer assembles on each DNA strand where it exits the tetramer. Each RuvB hexamer is contacted by two RuvA subunits (via domain III) on 2 adjacent RuvB subunits; this complex drives branch migration. In the full resolvosome a probable DNA-RuvA(4)-RuvB(12)-RuvC(2) complex forms which resolves the HJ.

The protein localises to the cytoplasm. The catalysed reaction is ATP + H2O = ADP + phosphate + H(+). Its function is as follows. The RuvA-RuvB-RuvC complex processes Holliday junction (HJ) DNA during genetic recombination and DNA repair, while the RuvA-RuvB complex plays an important role in the rescue of blocked DNA replication forks via replication fork reversal (RFR). RuvA specifically binds to HJ cruciform DNA, conferring on it an open structure. The RuvB hexamer acts as an ATP-dependent pump, pulling dsDNA into and through the RuvAB complex. RuvB forms 2 homohexamers on either side of HJ DNA bound by 1 or 2 RuvA tetramers; 4 subunits per hexamer contact DNA at a time. Coordinated motions by a converter formed by DNA-disengaged RuvB subunits stimulates ATP hydrolysis and nucleotide exchange. Immobilization of the converter enables RuvB to convert the ATP-contained energy into a lever motion, pulling 2 nucleotides of DNA out of the RuvA tetramer per ATP hydrolyzed, thus driving DNA branch migration. The RuvB motors rotate together with the DNA substrate, which together with the progressing nucleotide cycle form the mechanistic basis for DNA recombination by continuous HJ branch migration. Branch migration allows RuvC to scan DNA until it finds its consensus sequence, where it cleaves and resolves cruciform DNA. The sequence is that of Holliday junction branch migration complex subunit RuvB from Magnetococcus marinus (strain ATCC BAA-1437 / JCM 17883 / MC-1).